Consider the following 403-residue polypeptide: Non-structural maintenance of chromosomes element 4 homolog A (403 aa).

Residues 1–45 (MRKTVKRESEATGGKREADDEPEKLRSVKKEKQRKTEADSVRPDE) are compositionally biased toward basic and acidic residues. Disordered regions lie at residues 1–57 (MRKT…QGIS), 194–226 (LKQR…EEKT), and 342–403 (SSCP…LTSS). Positions 196–206 (QRKRAPNRKRT) are enriched in basic residues. The segment covering 342–353 (SSCPAASAPASA) has biased composition (low complexity). The span at 354-363 (DFTQDTQTTP) shows a compositional bias: polar residues. Positions 384–393 (TPDKEGDGTR) are enriched in basic and acidic residues. Residues 394 to 403 (RRCKRRLTSS) show a composition bias toward basic residues.

Belongs to the NSE4 family. As to quaternary structure, interacts with SMC5, SMC6A or SMC6B. The SMC5-SMC6 complex is composed of the SMC5 and SMC6 heterodimer attached via their hinge domain and from the non-SMC subunit NSE4A or NSE4B. Expressed in seedlings, rosette leaves and floral buds.

The protein localises to the nucleus. Functionally, component of the SMC5-SMC6 complex, that promotes sister chromatid alignment after DNA damage and facilitates double-stranded DNA breaks (DSBs) repair via homologous recombination between sister chromatids. This Arabidopsis thaliana (Mouse-ear cress) protein is Non-structural maintenance of chromosomes element 4 homolog A (NSE4A).